Consider the following 1609-residue polypeptide: Chitin synthase 5 (1609 aa).

3 disordered regions span residues 1–188 (MNPF…DRER), 248–280 (SGLGVTGPTNVPPGGLGRAPPLRRGKSLLGRDE), and 294–320 (VSLRRKQSKSGNKPSKEVPRDLGESKT). Topologically, residues 1-326 (MNPFESLPDA…ESKTSRIAPG (326 aa)) are cytoplasmic. Residues 34–44 (PGSTGRPQNPI) show a composition bias toward polar residues. Residues 61–82 (PQQQQQQQQQQQQQQQRSQQPF) are compositionally biased toward low complexity. The segment covering 100–111 (AYLNSTSSQPTQ) has biased composition (polar residues). A compositionally biased stretch (basic and acidic residues) spans 134 to 146 (DSVKSYGDDKRSI). A compositionally biased stretch (polar residues) spans 147–163 (NDPNSSSTALTQVNSLD). Positions 253-267 (TGPTNVPPGGLGRAP) are enriched in low complexity. Residues 307–320 (PSKEVPRDLGESKT) are compositionally biased toward basic and acidic residues. Residues 327 to 347 (PVGGWMIYCYILTICCPGPFL) traverse the membrane as a helical segment. At 348–364 (RIFGIRTPEQQRAWREK) the chain is on the extracellular side. A helical membrane pass occupies residues 365–385 (MGLIGIITLIMAAVGFLTFGF). The Cytoplasmic segment spans residues 386-624 (TQTVCGQQPD…ASKVELYLSL (239 aa)). The helical transmembrane segment at 625 to 645 (VFIIGVVAIKFFMAVMFGWFI) threads the bilayer. The Extracellular segment spans residues 646 to 1176 (SWRLGNYANE…MRFVVFMELT (531 aa)). N654 carries an N-linked (GlcNAc...) asparagine glycan. The tract at residues 729–767 (GVASPLGGSPPGSPSVAGGRSSASLAPAHSRRSSFSGSP) is disordered. The span at 742 to 752 (PSVAGGRSSAS) shows a compositional bias: low complexity. Residues N1015 and N1144 are each glycosylated (N-linked (GlcNAc...) asparagine). A helical transmembrane segment spans residues 1177–1197 (GTLVLPAAIAFTLYVVVQAFL). The Cytoplasmic portion of the chain corresponds to 1198 to 1202 (PNVPT). The helical transmembrane segment at 1203 to 1223 (PTIPLILLALILGLPGILIVV) threads the bilayer. Residues 1224-1227 (TSRK) are Extracellular-facing. A helical transmembrane segment spans residues 1228 to 1248 (IAYVGWMLIYLLSLPIWNFVL). Residues 1249-1609 (PLYAYWHMDD…PPGAAPPSFD (361 aa)) lie on the Cytoplasmic side of the membrane. Disordered regions lie at residues 1354-1381 (PNAMSSSSASQFGPDVSEVSHSKSPSGA) and 1399-1609 (TDAK…PSFD). Polar residues-rich tracts occupy residues 1502–1514 (NVSTEQRYPTVSE) and 1530–1552 (GSASPTPAQQGFNAANSNQQTRP). Positions 1568 to 1588 (AQGVRQVQRGARRSQMPNSAA) are enriched in low complexity.

Belongs to the chitin synthase family. Class IV subfamily.

It localises to the cell membrane. The protein resides in the cytoplasmic vesicle membrane. The enzyme catalyses [(1-&gt;4)-N-acetyl-beta-D-glucosaminyl](n) + UDP-N-acetyl-alpha-D-glucosamine = [(1-&gt;4)-N-acetyl-beta-D-glucosaminyl](n+1) + UDP + H(+). Polymerizes chitin, a structural polymer of the cell wall and septum, by transferring the sugar moiety of UDP-GlcNAc to the non-reducing end of the growing chitin polymer. This is Chitin synthase 5 from Mycosarcoma maydis (Corn smut fungus).